A 129-amino-acid polypeptide reads, in one-letter code: Small ribosomal subunit protein uS11 (129 aa).

The protein belongs to the universal ribosomal protein uS11 family. In terms of assembly, part of the 30S ribosomal subunit. Interacts with proteins S7 and S18. Binds to IF-3.

Functionally, located on the platform of the 30S subunit, it bridges several disparate RNA helices of the 16S rRNA. Forms part of the Shine-Dalgarno cleft in the 70S ribosome. This chain is Small ribosomal subunit protein uS11, found in Lawsonia intracellularis (strain PHE/MN1-00).